Here is a 314-residue protein sequence, read N- to C-terminus: Chlorinase cctP2 (314 aa).

The span at 1–14 (MEGKTSRYQDEAHD) shows a compositional bias: basic and acidic residues. The tract at residues 1–24 (MEGKTSRYQDEAHDSAGSFNEETE) is disordered. 2 consecutive short sequence motifs (HXXHC) follow at residues 150 to 154 (HALHC) and 177 to 181 (HIEHC).

Belongs to the ustYa family.

Its pathway is mycotoxin biosynthesis. Functionally, chlorinase; part of the gene cluster that mediates the biosynthesis of the mycotoxin cyclochlorotine, a hepatotoxic and carcinogenic cyclic chlorinated pentapeptide. Within the pathway, cctP2 catalyzes the formation of isocyclochlorotine via dichlorination of the Pro from the isocyclotine skeleton. The NRPS cctN initially catalyzes the condensation of L-serine (Ser), Pro, L-2-aminobutyrate (2Abu), Ser, and beta-Phe in this order to produce isocyclotine. After the dichlorination of Pro2 catalyzed by cctP2 to produce isocyclochlorotine, the cctO-mediated transacylation of isocyclochlorotine can furnish cyclochlorotine. The subsequent hydroxylation of cyclochlorotine by cctR yields hydroxycyclochlorotine as the final product. CctP1 probably acts as a phenylalanine aminomutase and provides the uncommon building block beta-Phe. Furthermore, 2Abu can be synthesized from threonine by one of the threonine dehydratases and transaminases localized outside of the cluster. The functions of the remaining proteins encoded by the cluster, cctM and cctT, have not been identified yet. The polypeptide is Chlorinase cctP2 (Talaromyces islandicus (Penicillium islandicum)).